Here is an 892-residue protein sequence, read N- to C-terminus: Translation initiation factor IF-2 (892 aa).

The segment covering 165–175 (EEQAELERQKT) has biased composition (basic and acidic residues). 2 disordered regions span residues 165-250 (EEQA…EDDS) and 264-300 (ERARRGSNTRGKGGGSHRGATHRGNENSIRSSGAHGF). Low complexity predominate over residues 208-222 (PRAVRPAPAARPSVS). In terms of domain architecture, tr-type G spans 391–560 (PRPPVVTIMG…SIQAEVLELK (170 aa)). Residues 400–407 (GHVDHGKT), 446–450 (DTPGH), and 500–503 (SKID) contribute to the GTP site.

It belongs to the TRAFAC class translation factor GTPase superfamily. Classic translation factor GTPase family. IF-2 subfamily.

It is found in the cytoplasm. Functionally, one of the essential components for the initiation of protein synthesis. Protects formylmethionyl-tRNA from spontaneous hydrolysis and promotes its binding to the 30S ribosomal subunits. Also involved in the hydrolysis of GTP during the formation of the 70S ribosomal complex. This is Translation initiation factor IF-2 from Xylella fastidiosa (strain 9a5c).